The sequence spans 273 residues: Eukaryotic translation initiation factor 3 subunit G-2 (273 aa).

Positions 168–192 are disordered; that stretch reads PPFMKDGGGGSGGKNWGRGRDRDDS. Gly residues predominate over residues 173–183; it reads DGGGGSGGKNW. In terms of domain architecture, RRM spans 193–271; the sequence is SAVRISNLSE…LILCVEWSKP (79 aa).

It belongs to the eIF-3 subunit G family. In terms of assembly, component of the eukaryotic translation initiation factor 3 (eIF-3) complex. The eIF-3 complex interacts with pix.

The protein localises to the cytoplasm. In terms of biological role, RNA-binding component of the eukaryotic translation initiation factor 3 (eIF-3) complex, which is involved in protein synthesis of a specialized repertoire of mRNAs and, together with other initiation factors, stimulates binding of mRNA and methionyl-tRNAi to the 40S ribosome. The eIF-3 complex specifically targets and initiates translation of a subset of mRNAs involved in cell proliferation. This subunit can bind 18S rRNA. The chain is Eukaryotic translation initiation factor 3 subunit G-2 from Drosophila erecta (Fruit fly).